A 309-amino-acid chain; its full sequence is Prephenate dehydratase (309 aa).

The Prephenate dehydratase domain occupies 3–191 (GIAYLGPEGT…ARTRFVLVGC (189 aa)). The ACT domain occupies 205–282 (SVVLRLDNVP…ADVRYLGSWP (78 aa)).

As to quaternary structure, homodimer.

It carries out the reaction prephenate + H(+) = 3-phenylpyruvate + CO2 + H2O. It participates in amino-acid biosynthesis; L-phenylalanine biosynthesis; phenylpyruvate from prephenate: step 1/1. This is Prephenate dehydratase (pheA) from Mycolicibacterium gilvum (strain PYR-GCK) (Mycobacterium gilvum (strain PYR-GCK)).